Reading from the N-terminus, the 138-residue chain is Membrane protein P8A7 (138 aa).

The next 4 membrane-spanning stretches (helical) occupy residues 12-30 (ILVI…YLFV), 32-56 (GLFH…IVLL), 71-90 (YTYW…LILG), and 93-118 (GFFL…LLGC).

The protein localises to the membrane. The sequence is that of Membrane protein P8A7 (pmpA) from Dictyostelium discoideum (Social amoeba).